The sequence spans 237 residues: MTPQDFYRTLEKDGFLLSSKQKEQFDTYFKLLVEWNTKINLTAITEKNEVYLKHFYDSIAPILQGFLANEPIKLLDIGAGAGFPSLPMKILFPNLEVTIIDSLNKRISFLTLLAQELGLENVHFFHGRAEDFGQDKAFRGQFDVVTARAVARMQVLSELTIPFLKIGGKLIALKAQAADQELEEAKNALCLLFGKVIKNHSYQLPNGDSRFITIVEKKKETPNKYPRKAGLPNKKPL.

Residues glycine 78, phenylalanine 83, 129 to 130 (AE), and arginine 148 contribute to the S-adenosyl-L-methionine site.

This sequence belongs to the methyltransferase superfamily. RNA methyltransferase RsmG family.

The protein localises to the cytoplasm. In terms of biological role, specifically methylates the N7 position of a guanine in 16S rRNA. This chain is Ribosomal RNA small subunit methyltransferase G, found in Streptococcus pyogenes serotype M2 (strain MGAS10270).